The chain runs to 84 residues: Exodeoxyribonuclease 7 small subunit (84 aa).

This sequence belongs to the XseB family. As to quaternary structure, heterooligomer composed of large and small subunits.

It is found in the cytoplasm. The enzyme catalyses Exonucleolytic cleavage in either 5'- to 3'- or 3'- to 5'-direction to yield nucleoside 5'-phosphates.. Its function is as follows. Bidirectionally degrades single-stranded DNA into large acid-insoluble oligonucleotides, which are then degraded further into small acid-soluble oligonucleotides. The protein is Exodeoxyribonuclease 7 small subunit of Haemophilus influenzae (strain ATCC 51907 / DSM 11121 / KW20 / Rd).